A 690-amino-acid chain; its full sequence is Elongation factor G (690 aa).

The 276-residue stretch at 8–283 folds into the tr-type G domain; it reads EDYRNFGIMA…AVVDYLPSPL (276 aa). GTP contacts are provided by residues 17–24, 81–85, and 135–138; these read AHIDAGKT, DTPGH, and NKMD.

Belongs to the TRAFAC class translation factor GTPase superfamily. Classic translation factor GTPase family. EF-G/EF-2 subfamily.

Its subcellular location is the cytoplasm. Its function is as follows. Catalyzes the GTP-dependent ribosomal translocation step during translation elongation. During this step, the ribosome changes from the pre-translocational (PRE) to the post-translocational (POST) state as the newly formed A-site-bound peptidyl-tRNA and P-site-bound deacylated tRNA move to the P and E sites, respectively. Catalyzes the coordinated movement of the two tRNA molecules, the mRNA and conformational changes in the ribosome. This chain is Elongation factor G, found in Bradyrhizobium sp. (strain BTAi1 / ATCC BAA-1182).